We begin with the raw amino-acid sequence, 372 residues long: Alanine racemase (372 aa).

The active-site Proton acceptor; specific for D-alanine is Lys37. The residue at position 37 (Lys37) is an N6-(pyridoxal phosphate)lysine. Arg136 is a substrate binding site. Tyr265 (proton acceptor; specific for L-alanine) is an active-site residue. Substrate is bound at residue Met313.

The protein belongs to the alanine racemase family. Requires pyridoxal 5'-phosphate as cofactor.

It catalyses the reaction L-alanine = D-alanine. It participates in amino-acid biosynthesis; D-alanine biosynthesis; D-alanine from L-alanine: step 1/1. Its function is as follows. Catalyzes the interconversion of L-alanine and D-alanine. May also act on other amino acids. This chain is Alanine racemase (alr), found in Synechocystis sp. (strain ATCC 27184 / PCC 6803 / Kazusa).